The chain runs to 424 residues: MNYEQVREADPAIAAALADERDRQEDTLAMIASENHVSEAVLQAQSSELTNKYAEGYPGERYYAGCGPADDVEELAIERAEELWGAEHINVQPHSGTQANMAVYLAMLEPGDRILSLELEHGGHLSHGHPANFTGQTYEVEQYEVDPETGYIDYDELHEQAEAFEPDIIVSGYSAYPREVEFERIQEAADAVDAYHLADIAHITGLVAAGVHQSPVGVADFVTGSTHKTIRAGRGGIVMCDEEYADDIDAAVFPGAQGGPLMHNVAGKAVGFKEALQPEFEQYAQQVIDNAEALGERLQEHGFSLVSGGTDNHLVLVDLRESHPDTSGTVAEEALEAAGIVLNKNTVPGETRSAFNPSGIRAGTPALTTRGFDEQACERVADIIANVIDNPDDEGTIDEAAAEVDALCEEYPLYQGESGITDFE.

Residues Leu119 and 123–125 each bind (6S)-5,6,7,8-tetrahydrofolate; that span reads GHL. N6-(pyridoxal phosphate)lysine is present on Lys228. 353–355 is a binding site for (6S)-5,6,7,8-tetrahydrofolate; the sequence is SAF.

The protein belongs to the SHMT family. In terms of assembly, homodimer. Pyridoxal 5'-phosphate serves as cofactor.

It is found in the cytoplasm. It carries out the reaction (6R)-5,10-methylene-5,6,7,8-tetrahydrofolate + glycine + H2O = (6S)-5,6,7,8-tetrahydrofolate + L-serine. The protein operates within one-carbon metabolism; tetrahydrofolate interconversion. It participates in amino-acid biosynthesis; glycine biosynthesis; glycine from L-serine: step 1/1. In terms of biological role, catalyzes the reversible interconversion of serine and glycine with tetrahydrofolate (THF) serving as the one-carbon carrier. Also exhibits THF-independent aldolase activity toward beta-hydroxyamino acids, producing glycine and aldehydes, via a retro-aldol mechanism. This Natronomonas pharaonis (strain ATCC 35678 / DSM 2160 / CIP 103997 / JCM 8858 / NBRC 14720 / NCIMB 2260 / Gabara) (Halobacterium pharaonis) protein is Serine hydroxymethyltransferase.